The following is a 619-amino-acid chain: Isocitrate dehydrogenase kinase/phosphatase (619 aa).

Residues 354-360 (APGIRGM) and Lys-375 contribute to the ATP site. Residue Asp-409 is part of the active site.

It belongs to the AceK family.

It is found in the cytoplasm. The enzyme catalyses L-seryl-[isocitrate dehydrogenase] + ATP = O-phospho-L-seryl-[isocitrate dehydrogenase] + ADP + H(+). Bifunctional enzyme which can phosphorylate or dephosphorylate isocitrate dehydrogenase (IDH) on a specific serine residue. This is a regulatory mechanism which enables bacteria to bypass the Krebs cycle via the glyoxylate shunt in response to the source of carbon. When bacteria are grown on glucose, IDH is fully active and unphosphorylated, but when grown on acetate or ethanol, the activity of IDH declines drastically concomitant with its phosphorylation. This Bordetella bronchiseptica (strain ATCC BAA-588 / NCTC 13252 / RB50) (Alcaligenes bronchisepticus) protein is Isocitrate dehydrogenase kinase/phosphatase.